Reading from the N-terminus, the 218-residue chain is Recombination protein RecR (218 aa).

The C4-type zinc-finger motif lies at 56–71; sequence CRICCNISREEVCRIC. The Toprim domain maps to 79 to 195; that stretch reads STICVVEEPK…VVSRLASGMP (117 aa).

This sequence belongs to the RecR family.

In terms of biological role, may play a role in DNA repair. It seems to be involved in an RecBC-independent recombinational process of DNA repair. It may act with RecF and RecO. The polypeptide is Recombination protein RecR (Corynebacterium diphtheriae (strain ATCC 700971 / NCTC 13129 / Biotype gravis)).